A 597-amino-acid chain; its full sequence is MKKEIKRDDVNVIEKDFGNNNSIILKLFKKFGEDSFFIQTTVTDIIVLWIDGSLLLALAKFLLTINNPYNMLFDLYGIDERMRLYKHNLPLSHFSVVYHFISINRNSDIILKIALLEEKLSLPTLTKLYPNANWYEREIWDMFGISFENHPNLIRILMPKTWVGHPLRKDHPARATEFDPYVLNKYKEDIEMEALKFKPEEWGMKKNKQSKYMFLNLGPNHPSAHGAFRIILQLDGEEIVDCVPDIGYHHRGAEKMGERQTWHNYIPYTDRVEYLGGCINEMPYVLAVERLAGIEVSQRIEVIRIMLSELFRINSHLLFISTFIQDVGAMTPVFLAFTDRQKIYDLIELITGSRMHPAWFRIGGLAHDLPKGWNALLKEFLLWMPKRLLKYINVALKNSILISRSKGIAEYNKHDALLWGVTGAGLRATGINFDVRKKRPYSGYQNFDFEVPIGAGISDCYSRVMLKLEEIWQSLAILKQCLENMPEGPFKMDHPNTTPPHKVRTLQHIETMISHFLKVSWGPVLSSNESFKMVEATKGINSYYLISDGNTMSYRTRIRTPSFPHLQQIPSVIRGNLISDLIAYLGSIDFVMSDVDR.

The NADH dehydrogenase I subunit C stretch occupies residues 1-188; the sequence is MKKEIKRDDV…DPYVLNKYKE (188 aa). The interval 211–597 is NADH dehydrogenase I subunit D; that stretch reads KYMFLNLGPN…IDFVMSDVDR (387 aa).

This sequence in the N-terminal section; belongs to the complex I 30 kDa subunit family. It in the C-terminal section; belongs to the complex I 49 kDa subunit family. NDH-1 is composed of 13 different subunits. Subunits NuoB, CD, E, F, and G constitute the peripheral sector of the complex.

The protein resides in the cell inner membrane. The enzyme catalyses a quinone + NADH + 5 H(+)(in) = a quinol + NAD(+) + 4 H(+)(out). In terms of biological role, NDH-1 shuttles electrons from NADH, via FMN and iron-sulfur (Fe-S) centers, to quinones in the respiratory chain. The immediate electron acceptor for the enzyme in this species is believed to be ubiquinone. Couples the redox reaction to proton translocation (for every two electrons transferred, four hydrogen ions are translocated across the cytoplasmic membrane), and thus conserves the redox energy in a proton gradient. This chain is NADH-quinone oxidoreductase subunit C/D, found in Buchnera aphidicola subsp. Baizongia pistaciae (strain Bp).